The following is a 365-amino-acid chain: MAVYVVTGKLGAGKTLVAVSRIQRTLAKGGIVATNLNLKLHHFPQVGRYAKQCRVMRIADKPTLEDLESIGRGNLTYDESKNGLLVLDECGTWFNSRNWSDKSRQPVIDWCLHARKLGWDIIFIIQDISLMDKQARDALAEHVVYCRRLDKLNIPIIGGLISVLSGGRLPLPKVHFGIVKYGDNPQSLTVDKWVYTGTDLYAAYDTKQIFTSDREISPPYCPLSPYYTHGIFSVKRDAKYYMRMTKIYFKKMNRVFLMASFLALGAACGIFYKSQAYSNQLQHIQDNSKTSVISKTDQSAEILPRLSINSYSQMGYDVSVTFKDAKAKIYNSFDLIKDGYRVDIKDACHVTIVKKSYIQQITCEG.

8–15 contributes to the ATP binding site; that stretch reads GKLGAGKT. A helical transmembrane segment spans residues 255–272; it reads VFLMASFLALGAACGIFY.

The protein belongs to the inovirus G1P protein family. Interacts with G4P; this interaction results in a complex that spans the inner an outer host membranes.

The protein localises to the host membrane. Its function is as follows. Isoform G1P plays an essential role in phage assembly. It is required to increase the number of adhesion zones between the inner and outer membranes of the host cell. The extrusion of neo-synthesized phages occurs at these adhesion sites. May be involved with G4P in creating zone through which the phage assembled and extruded. Functionally, isoform G11P is also involved in phage assembly, probably playing a structural role in the formation of the phage assembly site. This is Gene 1 protein (I) from Salmonella phage IKe (Bacteriophage IKe).